The chain runs to 466 residues: Neuronal acetylcholine receptor subunit non-alpha-3 (466 aa).

Positions 1 to 28 (MKLQISGLLLVTAVAYATIEAPEEFVSL) are cleaved as a signal peptide. The Extracellular portion of the chain corresponds to 29–235 (AEMEDTLLRN…VTYSFILKRL (207 aa)). 4 N-linked (GlcNAc...) asparagine glycosylation sites follow: asparagine 54, asparagine 141, asparagine 169, and asparagine 208. Cysteine 156 and cysteine 170 are joined by a disulfide. The next 3 membrane-spanning stretches (helical) occupy residues 236–260 (PLFY…VFYL), 268–285 (LLLS…LLVI), and 302–323 (YLLF…VINV). At 324-438 (HHRSSATYHP…WKFVAQVLDR (115 aa)) the chain is on the cytoplasmic side. The helical transmembrane segment at 439–456 (IFLWVFLTASVLGTILIF) threads the bilayer.

This sequence belongs to the ligand-gated ion channel (TC 1.A.9) family. Acetylcholine receptor (TC 1.A.9.1) subfamily. Neuronal AChR seems to be composed of two different type of subunits: alpha and non-alpha (beta). As to expression, retina, tectum and brain.

The protein localises to the postsynaptic cell membrane. It is found in the cell membrane. Its function is as follows. After binding acetylcholine, the AChR responds by an extensive change in conformation that affects all subunits and leads to opening of an ion-conducting channel across the plasma membrane. The protein is Neuronal acetylcholine receptor subunit non-alpha-3 of Carassius auratus (Goldfish).